The primary structure comprises 374 residues: 4-hydroxybenzoate polyprenyltransferase, mitochondrial (374 aa).

The transit peptide at 1-63 directs the protein to the mitochondrion; that stretch reads MLRLGGAGLV…RALSLSAAAV (63 aa). Over 64-83 the chain is Mitochondrial matrix; it reads VNSAPRPLQPYLRLMRLDKP. A helical membrane pass occupies residues 84-104; that stretch reads IGTWLLYLPCTWSIGLAADPG. At 105 to 108 the chain is on the mitochondrial intermembrane side; the sequence is CFPD. A helical transmembrane segment spans residues 109 to 129; the sequence is WYMLSLFGTGAILMRGAGCTI. Residues 130–153 are Mitochondrial matrix-facing; it reads NDMWDRDFDKKVERTANRPIAAGD. Residues 154–174 traverse the membrane as a helical segment; it reads ISAFQSFVFLGAQLTLALGVL. Residues 175–176 are Mitochondrial intermembrane-facing; that stretch reads LH. The helical transmembrane segment at 177–197 threads the bilayer; sequence LNYYSIAMGAASLLLVVTYPL. Residues 198-200 are Mitochondrial matrix-facing; that stretch reads MKR. Residues 201 to 221 traverse the membrane as a helical segment; that stretch reads VTFWPQLALGLTFNWGALLGW. At 222–230 the chain is on the mitochondrial intermembrane side; the sequence is SAVKGSCDP. The chain crosses the membrane as a helical span at residues 231 to 251; that stretch reads AVCLPLYFSGVMWTLIYDTIY. Residues 252–277 are Mitochondrial matrix-facing; it reads AHQDKKDDALIGLKSTALLFRENTKQ. The helical transmembrane segment at 278–298 threads the bilayer; that stretch reads WLSGFGVAMVGALSLVGASSG. At 299–300 the chain is on the mitochondrial intermembrane side; the sequence is QT. The helical transmembrane segment at 301–321 threads the bilayer; it reads LPYYAAVAAVGAHLAHQIYTV. At 322 to 332 the chain is on the mitochondrial matrix side; sequence DIHRAEDCWEK. The chain crosses the membrane as a helical span at residues 333 to 353; it reads FTSNRTVGLLLFLGIVLGNLY. Topologically, residues 354–374 are mitochondrial intermembrane; the sequence is KDKPDETKGVDAVGEESERTS.

It belongs to the UbiA prenyltransferase family. Mg(2+) serves as cofactor.

The protein resides in the mitochondrion inner membrane. It carries out the reaction an all-trans-polyprenyl diphosphate + 4-hydroxybenzoate = a 4-hydroxy-3-(all-trans-polyprenyl)benzoate + diphosphate. The enzyme catalyses all-trans-decaprenyl diphosphate + 4-hydroxybenzoate = 4-hydroxy-3-(all-trans-decaprenyl)benzoate + diphosphate. It catalyses the reaction all-trans-nonaprenyl diphosphate + 4-hydroxybenzoate = 4-hydroxy-3-(all-trans-nonaprenyl)benzoate + diphosphate. Its pathway is cofactor biosynthesis; ubiquinone biosynthesis. Mediates the second step in the final reaction sequence of coenzyme Q (CoQ) biosynthesis. Catalyzes the prenylation of para-hydroxybenzoate (PHB) with an all-trans polyprenyl group (such as all-trans-nonaprenyl diphosphate). The length of the polyprenyl side chain varies depending on the species, in humans, the side chain is comprised of 10 isoprenyls producing CoQ10 (also known as ubiquinone), whereas rodents predominantly generate CoQ9. However, this specificity is not complete, human tissues have low amounts of CoQ9 and rodent organs contain some CoQ10. Plays a central role in the biosynthesis of CoQ9. CoQ9 is a vital molecule that transports electrons from mitochondrial respiratory chain complexes. CoQs also function as cofactors for uncoupling protein and plays a role as regulator of the extracellularly-induced ceramide-dependent apoptotic pathway. Regulates mitochondrial permeability transition pore (mPTP) opening and ROS production (pivotal events in cell death) in a tissue specific manner. This Rattus norvegicus (Rat) protein is 4-hydroxybenzoate polyprenyltransferase, mitochondrial.